The following is a 447-amino-acid chain: MTKRVAVIGAGPSGLAQLRAFQSAADQGAEIPEIVCFEKQANWGGLWNYTWRTGLDENGEPVHCSMYRYLWSNGPKEGLEFADYSFEEHFGKQIASYPPRAVLFDYIEGRVHKADVRKWIRFNSPVRWVSYDAETAKFTVTAHNHETDSTYSEDFDHVICASGHFSTPNVPFYEGFDTFNGRIVHAHDFRDAREFEGKDVLVMGASYSAEDIGSQCWKYGAKSITSCYRSAPMGYAWPDNWEEKPALEKLTGKTAHFADGSTRDVDAIILCTGYKHFFSFLPDDLRLKTANRLATADLYKGVAYVHNPAMFYLGMQDQWFTFNMFDAQAWWVRDAILGRITLPKDKAAMLADVAERETREEASDDVKYAIRYQADYVKELVAETDYPSFDIDGACDAFFEWKKHKAKDIMAFRDNSYKSVITGTMAPVHHTPWKEALDDSMEAYLQN.

FAD contacts are provided by Ser13, Glu38, Gln40, Leu46, Trp47, and His63. NADP(+) contacts are provided by Trp71 and Asn73. 2 residues coordinate FAD: Asn73 and Val126. Residues Tyr173, Ala205, Ser206, Ser208, and Arg229 each contribute to the NADP(+) site. FAD is bound by residues Gln318 and Thr321. Arg413 lines the NADP(+) pocket.

It belongs to the FMO family. FAD serves as cofactor.

The catalysed reaction is trimethylamine + NADPH + O2 = trimethylamine N-oxide + NADP(+) + H2O. Catalyzes the oxidation of trimethylamine (TMA) to produce trimethylamine N-oxide (TMAO). TMA is the best substrate, but the enzyme can also oxidize methimazole, indole and dimethylamine (DMA). The sequence is that of Trimethylamine monooxygenase from Roseovarius nubinhibens (strain ATCC BAA-591 / DSM 15170 / ISM).